The sequence spans 156 residues: Transcriptional repressor NrdR (156 aa).

The segment at 3-34 is a zinc-finger region; that stretch reads CPYCGHLDNKVIDSRINKDATITRRRRSCLAC. In terms of domain architecture, ATP-cone spans 49-139; sequence PMLVKKDGRR…VYRQFKDVDE (91 aa).

Belongs to the NrdR family. The cofactor is Zn(2+).

In terms of biological role, negatively regulates transcription of bacterial ribonucleotide reductase nrd genes and operons by binding to NrdR-boxes. This chain is Transcriptional repressor NrdR, found in Desulfotalea psychrophila (strain LSv54 / DSM 12343).